The sequence spans 335 residues: Fructokinase-2 (335 aa).

The protein belongs to the carbohydrate kinase PfkB family. As to expression, expressed in roots, at higher levels in stems, and hardly detectable in leaves.

The enzyme catalyses D-fructose + ATP = D-fructose 6-phosphate + ADP + H(+). It participates in glycan biosynthesis; starch biosynthesis. Its activity is regulated as follows. Inhibited at high fructose. Functionally, may play an important role in maintaining the flux of carbon towards starch formation. May also be involved in a sugar-sensing pathway. This is Fructokinase-2 (FRK2) from Zea mays (Maize).